We begin with the raw amino-acid sequence, 248 residues long: 4-hydroxy-tetrahydrodipicolinate reductase (248 aa).

NAD(+) contacts are provided by residues 9 to 14 (GAKGRV), 77 to 79 (GTT), and 104 to 107 (APNF). The active-site Proton donor/acceptor is the His-134. His-135 contributes to the (S)-2,3,4,5-tetrahydrodipicolinate binding site. Residue Lys-138 is the Proton donor of the active site. 144–145 (GT) contributes to the (S)-2,3,4,5-tetrahydrodipicolinate binding site.

The protein belongs to the DapB family.

The protein resides in the cytoplasm. The enzyme catalyses (S)-2,3,4,5-tetrahydrodipicolinate + NAD(+) + H2O = (2S,4S)-4-hydroxy-2,3,4,5-tetrahydrodipicolinate + NADH + H(+). It carries out the reaction (S)-2,3,4,5-tetrahydrodipicolinate + NADP(+) + H2O = (2S,4S)-4-hydroxy-2,3,4,5-tetrahydrodipicolinate + NADPH + H(+). Its pathway is amino-acid biosynthesis; L-lysine biosynthesis via DAP pathway; (S)-tetrahydrodipicolinate from L-aspartate: step 4/4. Its function is as follows. Catalyzes the conversion of 4-hydroxy-tetrahydrodipicolinate (HTPA) to tetrahydrodipicolinate. In Corynebacterium aurimucosum (strain ATCC 700975 / DSM 44827 / CIP 107346 / CN-1) (Corynebacterium nigricans), this protein is 4-hydroxy-tetrahydrodipicolinate reductase.